The following is a 953-amino-acid chain: Protein translocase subunit SecA (953 aa).

ATP contacts are provided by residues Gln-84, 102–106 (GEGKT), and Asp-491. Residues 832–953 (EPEPAPEQPS…RAEAKKNKRR (122 aa)) are disordered. The segment covering 841-865 (SVPVSVSRSAEPTPDLQAAAEAAAA) has biased composition (low complexity). Basic and acidic residues predominate over residues 898–907 (KGLDAPEKQR). Residues 908–934 (LNYSGPTEQGGVQTTSESAGEQGNGTS) show a composition bias toward polar residues. Over residues 940–953 (RAAARAEAKKNKRR) the composition is skewed to basic and acidic residues.

The protein belongs to the SecA family. Monomer and homodimer. Part of the essential Sec protein translocation apparatus which comprises SecA, SecYEG and auxiliary proteins SecDF. Other proteins may also be involved.

Its subcellular location is the cell membrane. The protein localises to the cytoplasm. It catalyses the reaction ATP + H2O + cellular proteinSide 1 = ADP + phosphate + cellular proteinSide 2.. Functionally, part of the Sec protein translocase complex. Interacts with the SecYEG preprotein conducting channel. Has a central role in coupling the hydrolysis of ATP to the transfer of proteins into and across the cell membrane, serving as an ATP-driven molecular motor driving the stepwise translocation of polypeptide chains across the membrane. In Saccharopolyspora erythraea (strain ATCC 11635 / DSM 40517 / JCM 4748 / NBRC 13426 / NCIMB 8594 / NRRL 2338), this protein is Protein translocase subunit SecA.